Consider the following 115-residue polypeptide: Aspartate 1-decarboxylase (115 aa).

Serine 25 acts as the Schiff-base intermediate with substrate; via pyruvic acid in catalysis. A Pyruvic acid (Ser) modification is found at serine 25. Residue threonine 57 coordinates substrate. Tyrosine 58 functions as the Proton donor in the catalytic mechanism. Residue 71-73 (GAA) coordinates substrate.

The protein belongs to the PanD family. In terms of assembly, heterooctamer of four alpha and four beta subunits. Requires pyruvate as cofactor. Post-translationally, is synthesized initially as an inactive proenzyme, which is activated by self-cleavage at a specific serine bond to produce a beta-subunit with a hydroxyl group at its C-terminus and an alpha-subunit with a pyruvoyl group at its N-terminus.

The protein resides in the cytoplasm. The catalysed reaction is L-aspartate + H(+) = beta-alanine + CO2. Its pathway is cofactor biosynthesis; (R)-pantothenate biosynthesis; beta-alanine from L-aspartate: step 1/1. In terms of biological role, catalyzes the pyruvoyl-dependent decarboxylation of aspartate to produce beta-alanine. The sequence is that of Aspartate 1-decarboxylase from Campylobacter concisus (strain 13826).